Here is a 441-residue protein sequence, read N- to C-terminus: GTPase Der (441 aa).

2 EngA-type G domains span residues 4–169 (PVVA…PDSS) and 178–353 (PRVA…ENNS). Residues 10–17 (GRPNVGKS), 57–61 (DTGGI), 120–123 (NKVD), 184–191 (GKPNVGKS), 231–235 (DTAGL), and 296–299 (NKWD) each bind GTP. Positions 354-438 (MRVATGVLNE…ALKFITRERK (85 aa)) constitute a KH-like domain.

The protein belongs to the TRAFAC class TrmE-Era-EngA-EngB-Septin-like GTPase superfamily. EngA (Der) GTPase family. Associates with the 50S ribosomal subunit.

GTPase that plays an essential role in the late steps of ribosome biogenesis. This chain is GTPase Der, found in Agathobacter rectalis (strain ATCC 33656 / DSM 3377 / JCM 17463 / KCTC 5835 / VPI 0990) (Eubacterium rectale).